The sequence spans 226 residues: MYSISFQEDSLLPRERLAKEGVEALSNQELLAILLRTGTRQVSVFEIAQKVLNNLSSLTDLKKMTLQELQSLSGIGRVKAIELQAMIELGHRIHKHETLEMESILSSQKLAKKMQQELGDKKQEHLVALYLNTQNQIIHQQTIFIGSVTRSIAEPREILHYAIKHMATSLILVHNHPSGAVAPSQNDDHVTKLVKEACELMGIVLLDHLIVSHSNYFSYREKTDLI.

Residues 103–225 (SILSSQKLAK…YFSYREKTDL (123 aa)) enclose the MPN domain. Zn(2+) is bound by residues histidine 174, histidine 176, and aspartate 187. Positions 174 to 187 (HNHPSGAVAPSQND) match the JAMM motif motif.

This sequence belongs to the UPF0758 family.

The chain is UPF0758 protein SPJ_1027 from Streptococcus pneumoniae (strain JJA).